The sequence spans 209 residues: Redox-sensing transcriptional repressor Rex (209 aa).

The H-T-H motif DNA-binding region spans 16-55 (LYYRFIQNLSLSGKQRVSSAELSEAVKVDSATIRRDFSYF). 90–95 (GVGNLG) is a binding site for NAD(+).

This sequence belongs to the transcriptional regulatory Rex family. Homodimer.

Its subcellular location is the cytoplasm. Modulates transcription in response to changes in cellular NADH/NAD(+) redox state. The chain is Redox-sensing transcriptional repressor Rex from Bacillus cytotoxicus (strain DSM 22905 / CIP 110041 / 391-98 / NVH 391-98).